A 242-amino-acid polypeptide reads, in one-letter code: E3 ubiquitin-protein ligase ZNRF2 (242 aa).

Residues 1–141 (MGAKQSGPAA…VGGSPGGPRL (141 aa)) are disordered. Gly-2 is lipidated: N-myristoyl glycine. Ser-19, Ser-21, and Ser-25 each carry phosphoserine. Over residues 19-29 (SGSDLPSSSSG) the composition is skewed to low complexity. The segment covering 30–41 (GANGTAGGGGGA) has biased composition (gly residues). A compositionally biased stretch (low complexity) spans 59 to 97 (PSASGGAAAAAAAPAAPAAPRSRSLGGAVGSVASGARAA). Residues Ser-82, Ser-89, Ser-113, Ser-116, and Ser-135 each carry the phosphoserine modification. Positions 99–118 (SPFSIPNSSSGPYGSQDSVH) are enriched in polar residues. At Ser-145 the chain carries Phosphoserine; by MTOR. Phosphoserine is present on residues Ser-151 and Ser-193. The RING-type; atypical zinc finger occupies 199–240 (CAICLEELQQGDTIARLPCLCIYHKGCIDEWFEVNRSCPEHP).

As to quaternary structure, interacts with UBE2N. Interacts with ZNRF1. Interacts (when phosphorylated) with YWHAE. Post-translationally, phosphorylated; leading to binding to YWHAE. Phosphorylated by MTOR at Ser-145 and dephosphorylated by PP6C. Ser-145 phosphorylation stimulates vesicle-to-cytosol translocation. Highly expressed in the brain, with higher expression during development than in adult. Expressed also in mammary glands, testis, colon and kidney.

The protein resides in the endosome membrane. Its subcellular location is the lysosome membrane. It localises to the presynaptic cell membrane. The protein localises to the cytoplasm. It carries out the reaction S-ubiquitinyl-[E2 ubiquitin-conjugating enzyme]-L-cysteine + [acceptor protein]-L-lysine = [E2 ubiquitin-conjugating enzyme]-L-cysteine + N(6)-ubiquitinyl-[acceptor protein]-L-lysine.. It functions in the pathway protein modification; protein ubiquitination. Functionally, E3 ubiquitin-protein ligase that plays a role in the establishment and maintenance of neuronal transmission and plasticity. Ubiquitinates the Na(+)/K(+) ATPase alpha-1 subunit/ATP1A1 and thereby influences its endocytosis and/or degradation. Acts also as a positive regulator of mTORC1 activation by amino acids, which functions upstream of the V-ATPase and of Rag-GTPases. In turn, phosphorylation by mTOR leads to its inhibition via targeting to the cytosol allowing a self-regulating feedback mechanism. The sequence is that of E3 ubiquitin-protein ligase ZNRF2 (ZNRF2) from Homo sapiens (Human).